Consider the following 314-residue polypeptide: Annexin-like protein RJ4 (314 aa).

4 Annexin repeats span residues 10 to 81 (FCAK…RWTL), 82 to 153 (DPAD…ALVT), 165 to 236 (KLAN…TAIR), and 240 to 311 (DPKK…TLLG). The Ca(2+) site is built by Gly-25, Gly-27, and Glu-67. 5 residues coordinate Ca(2+): Ile-253, Arg-255, Gly-257, Asp-297, and Thr-298.

Belongs to the annexin (TC 1.A.31.1) family. As to expression, predominantly in developing fruit.

This chain is Annexin-like protein RJ4, found in Fragaria ananassa (Strawberry).